The chain runs to 105 residues: uncharacterized protein (105 aa).

Belongs to the asfivirus C122R family.

The protein resides in the virion. This is an uncharacterized protein from African swine fever virus (strain Badajoz 1971 Vero-adapted) (Ba71V).